The following is a 1072-amino-acid chain: DNA-directed RNA polymerase subunit beta (1072 aa).

It belongs to the RNA polymerase beta chain family. In terms of assembly, in plastids the minimal PEP RNA polymerase catalytic core is composed of four subunits: alpha, beta, beta', and beta''. When a (nuclear-encoded) sigma factor is associated with the core the holoenzyme is formed, which can initiate transcription.

The protein resides in the plastid. Its subcellular location is the chloroplast. The enzyme catalyses RNA(n) + a ribonucleoside 5'-triphosphate = RNA(n+1) + diphosphate. DNA-dependent RNA polymerase catalyzes the transcription of DNA into RNA using the four ribonucleoside triphosphates as substrates. The protein is DNA-directed RNA polymerase subunit beta of Barbarea verna (Land cress).